The primary structure comprises 1009 residues: Membrane alanyl aminopeptidase (1009 aa).

A signal peptide spans 1 to 15 (MAAIKLLVLSLACAC). Positions 16–52 (VIAHSPIPPASRTIFLDERLEGGAFENIDAFENIELS) are cleaved as a propeptide — activation peptide. 338 to 342 (GAMEN) provides a ligand contact to substrate. H374 provides a ligand contact to Zn(2+). The active-site Proton acceptor is the E375. Residues H378 and E397 each contribute to the Zn(2+) site. Residue N906 is glycosylated (N-linked (GlcNAc...) asparagine). Residues 955-980 (PSTSTTSTTAAPTTVTQPTITEPSTP) form a disordered region. Residue D987 is the site of GPI-anchor amidated aspartate attachment. A propeptide spans 988 to 1009 (SAMTSFASLFIISLGAILHLIL) (removed in mature form).

The protein belongs to the peptidase M1 family. Requires Zn(2+) as cofactor.

The protein resides in the cell membrane. Binds to the B.thuringiensis toxin, CryIA(C). The protein is Membrane alanyl aminopeptidase of Heliothis virescens (Tobacco budworm moth).